The primary structure comprises 264 residues: MKQYLDLMKHILDKGTDKSDRTGTGTRSVFGYQMRFDLNEGFPLVTTKKCHLRSIIHELLWFLKGETNVDYLHENKVSIWDEWADEKGNLGPVYGAQWRSWPTPDGRHIDQISQVIEQIKATPDSRRLIVSAWNVGELDKMALAPCHAFFQFYVADGKLSCQLYQRSCDVFLGLPFNIASYALLTMMVAQQCNLGLGDFVWTGGDTHLYSNHMEQTQLQLSREPRPLPTMKILRHPESIFDYRFEDFELSGYDPHPHIKAPVAI.

Arg-21 serves as a coordination point for dUMP. His-51 lines the (6R)-5,10-methylene-5,6,7,8-tetrahydrofolate pocket. Arg-126–Arg-127 provides a ligand contact to dUMP. Residue Cys-146 is the Nucleophile of the active site. DUMP contacts are provided by residues Arg-166–Asp-169, Asn-177, and His-207–Tyr-209. Asp-169 contacts (6R)-5,10-methylene-5,6,7,8-tetrahydrofolate. Residue Ala-263 participates in (6R)-5,10-methylene-5,6,7,8-tetrahydrofolate binding.

The protein belongs to the thymidylate synthase family. Bacterial-type ThyA subfamily. Homodimer.

It localises to the cytoplasm. It carries out the reaction dUMP + (6R)-5,10-methylene-5,6,7,8-tetrahydrofolate = 7,8-dihydrofolate + dTMP. It participates in pyrimidine metabolism; dTTP biosynthesis. Catalyzes the reductive methylation of 2'-deoxyuridine-5'-monophosphate (dUMP) to 2'-deoxythymidine-5'-monophosphate (dTMP) while utilizing 5,10-methylenetetrahydrofolate (mTHF) as the methyl donor and reductant in the reaction, yielding dihydrofolate (DHF) as a by-product. This enzymatic reaction provides an intracellular de novo source of dTMP, an essential precursor for DNA biosynthesis. The sequence is that of Thymidylate synthase from Shewanella amazonensis (strain ATCC BAA-1098 / SB2B).